Reading from the N-terminus, the 138-residue chain is Small ribosomal subunit protein uS11c (138 aa).

The interval 1–24 (MAKSPPRSGSRRPGRIGSRKSGRR) is disordered. A compositionally biased stretch (basic residues) spans 9 to 24 (GSRRPGRIGSRKSGRR).

This sequence belongs to the universal ribosomal protein uS11 family. As to quaternary structure, part of the 30S ribosomal subunit.

It is found in the plastid. It localises to the chloroplast. The chain is Small ribosomal subunit protein uS11c from Citrus sinensis (Sweet orange).